The sequence spans 110 residues: Chloride intracellular channel protein 1 (110 aa).

An N-acetylalanine modification is found at Ala2. The required for insertion into the membrane stretch occupies residues 2 to 90; it reads AEEQPQVELF…EEFLEAVLCP (89 aa). An N6-acetyllysine modification is found at Lys13. A G-site motif is present at residues 24–27; it reads CPFS. A disulfide bridge links Cys24 with Cys59. A helical membrane pass occupies residues 26 to 46; that stretch reads FSQRLFMVLWLKGVTFNVTTV.

It belongs to the chloride channel CLIC family. Monomer. Homodimer (in vitro). Interacts with TRAPPC2. Dimerization requires a conformation change that leads to the exposure of a large hydrophobic surface. In vivo, this may lead to membrane insertion.

The protein localises to the nucleus. Its subcellular location is the nucleus membrane. It is found in the cytoplasm. The protein resides in the cell membrane. It localises to the endoplasmic reticulum. It carries out the reaction L-dehydroascorbate + 2 glutathione = glutathione disulfide + L-ascorbate. It catalyses the reaction chloride(in) = chloride(out). The enzyme catalyses iodide(out) = iodide(in). The catalysed reaction is thiocyanate(in) = thiocyanate(out). It carries out the reaction nitrate(in) = nitrate(out). It catalyses the reaction bromide(in) = bromide(out). The enzyme catalyses fluoride(in) = fluoride(out). Its function is as follows. In the soluble state, catalyzes glutaredoxin-like thiol disulfide exchange reactions with reduced glutathione as electron donor. Reduces selenite and dehydroascorbate and may act as an antioxidant during oxidative stress response. Can insert into membranes and form voltage-dependent multi-ion conductive channels. Membrane insertion seems to be redox-regulated and may occur only under oxidizing conditions. Involved in regulation of the cell cycle. The chain is Chloride intracellular channel protein 1 (CLIC1) from Sus scrofa (Pig).